Reading from the N-terminus, the 1189-residue chain is Pumilio homolog 1 (1189 aa).

5 disordered regions span residues 24–65 (QHAQ…SSPV), 233–288 (SCLR…QNGI), 491–525 (QQTT…GQQT), 614–652 (AGTT…NNSL), and 743–774 (GPVG…SSLN). Residues 45-58 (QAQPQPAANQALAA) show a composition bias toward low complexity. The span at 250–277 (NDKGDKKNKGTFDGDKLGDLKEEGDVMD) shows a compositional bias: basic and acidic residues. The span at 491–503 (QQTTQQTQQGQQQ) shows a compositional bias: low complexity. Residues 512–525 (RPLTPNQNQQGQQT) show a composition bias toward polar residues. Low complexity-rich tracts occupy residues 627 to 652 (QQPQ…NNSL) and 764 to 774 (LSSHGSSSSLN). A PUM-HD domain is found at 829 to 1171 (GRSRLLEDFR…HILAKLEKYY (343 aa)). Pumilio repeat units lie at residues 849–884 (EIAG…LVFN), 885–920 (EILQ…ALAE), 921–958 (RIRG…EMVR), 959–994 (ELDG…FIID), 995–1030 (AFKG…PILE), 1031–1066 (ELHQ…KIVA), 1067–1102 (EIRG…MLID), and 1106–1145 (TMND…IVMH). The segment at 864–868 (SRFIQ) is adenine-nucleotide binding in RNA target. A uracil-nucleotide binding in RNA target region spans residues 900 to 904 (NYVIQ). Residues 936–940 (CRVIQ) form an adenine-nucleotide binding in RNA target region. Residues 974-978 (NHVVQ) are non-specific-nucleotide binding in RNA target. Residues 1010 to 1014 (CRVIQ) form an adenine-nucleotide binding in RNA target region. The tract at residues 1046–1050 (NYVIQ) is uracil-nucleotide binding in RNA target. Guanine-nucleotide binding in RNA target stretches follow at residues 1082–1086 (SNVVE) and 1083–1086 (NVVE). Residues 1125 to 1129 (NYVVQ) form a uracil-nucleotide binding in RNA target region.

In terms of tissue distribution, detected in embryonic male and female gonads, heart, liver and muscle. Detected in adult brain, testis, ovary, heart, lung, spleen, kidney and muscle.

Its subcellular location is the cytoplasm. The protein localises to the P-body. The protein resides in the cytoplasmic granule. Functionally, sequence-specific RNA-binding protein that acts as a post-transcriptional repressor by binding the 3'-UTR of mRNA targets. Binds to an RNA consensus sequence, the Pumilio Response Element (PRE), 5'-UGUANAUA-3', that is related to the Nanos Response Element (NRE). Mediates post-transcriptional repression of transcripts via different mechanisms: acts via direct recruitment of the CCR4-POP2-NOT deadenylase leading to translational inhibition and mRNA degradation. Also mediates deadenylation-independent repression by promoting accessibility of miRNAs. This is Pumilio homolog 1 (PUM1) from Gallus gallus (Chicken).